Here is a 55-residue protein sequence, read N- to C-terminus: Neurotoxin B-II (55 aa).

At Pro-10 the chain carries Hydroxyproline. Disulfide bonds link Cys-12–Cys-48, Cys-16–Cys-52, Cys-23–Cys-41, and Cys-26–Cys-37.

Belongs to the worm B-toxin family.

It localises to the secreted. In terms of biological role, this toxin increases the excitability of nerves by delaying the inactivation of the voltage-gated sodium channel (Nav). Only acts on some crustacean. Neurotoxin B-II is less abundant, but 15-fold more toxic than neurotoxin B-VI. The sequence is that of Neurotoxin B-II from Cerebratulus lacteus (Milky ribbon worm).